Consider the following 103-residue polypeptide: Putative protein YmfH (103 aa).

Positions 1–34 are disordered; sequence MVNAAQRTRVKVEADNRPSVDTHPPGVQPSPGTG. Residues 10 to 20 show a composition bias toward basic and acidic residues; the sequence is VKVEADNRPSV. Transmembrane regions (helical) follow at residues 42 to 62 and 73 to 93; these read MLCVVLAVPVFSLVLSGTALF and GLITRPILIAVATGALLCFVE.

Its subcellular location is the cell inner membrane. In Escherichia coli (strain K12), this protein is Putative protein YmfH (ymfH).